A 150-amino-acid polypeptide reads, in one-letter code: Small ribosomal subunit protein uS15 (150 aa).

A compositionally biased stretch (basic residues) spans 1-10 (MPHRSRHKRG). Residues 1–21 (MPHRSRHKRGSSGSVRPATKT) are disordered.

The protein belongs to the universal ribosomal protein uS15 family. Part of the 30S ribosomal subunit.

The sequence is that of Small ribosomal subunit protein uS15 from Caldivirga maquilingensis (strain ATCC 700844 / DSM 13496 / JCM 10307 / IC-167).